A 185-amino-acid polypeptide reads, in one-letter code: Fimbrial subunit type 1 (185 aa).

An N-terminal signal peptide occupies residues 1-22 (MRHKLMTSTIASLMFVAAAAVA). Cys-46 and Cys-86 are joined by a disulfide.

This sequence belongs to the fimbrial protein family.

Its subcellular location is the fimbrium. The chain is Fimbrial subunit type 1 from Salmonella typhimurium.